The primary structure comprises 318 residues: Methionyl-tRNA formyltransferase (318 aa).

120 to 123 serves as a coordination point for (6S)-5,6,7,8-tetrahydrofolate; sequence SLLP.

It belongs to the Fmt family.

It carries out the reaction L-methionyl-tRNA(fMet) + (6R)-10-formyltetrahydrofolate = N-formyl-L-methionyl-tRNA(fMet) + (6S)-5,6,7,8-tetrahydrofolate + H(+). Functionally, attaches a formyl group to the free amino group of methionyl-tRNA(fMet). The formyl group appears to play a dual role in the initiator identity of N-formylmethionyl-tRNA by promoting its recognition by IF2 and preventing the misappropriation of this tRNA by the elongation apparatus. This Variovorax paradoxus (strain S110) protein is Methionyl-tRNA formyltransferase.